The sequence spans 105 residues: uncharacterized protein (105 aa).

2 helical membrane passes run 7–26 and 30–52; these read VLSVISVFSAAALVYRWLSL and VDMTVIFFATLLIASLTLLLISI.

It localises to the cell membrane. This is an uncharacterized protein from Archaeoglobus fulgidus (strain ATCC 49558 / DSM 4304 / JCM 9628 / NBRC 100126 / VC-16).